The primary structure comprises 257 residues: Adenosylcobinamide-GDP ribazoletransferase (257 aa).

The next 6 membrane-spanning stretches (helical) occupy residues 4–24 (AVRGLLLALAFLTRLPVWWLG), 40–60 (VVGLILGILLLALYALLQWFF), 64–84 (FVVQAALLVAAWALVTGLLHL), 116–136 (AAVAVITLALVVKVAALAALL), 140–160 (AALAALLIAPVLGRAAAALLI), and 193–213 (LFVTALAGWAGLAAVLGVVAV).

It belongs to the CobS family. Mg(2+) is required as a cofactor.

It localises to the cell inner membrane. It carries out the reaction alpha-ribazole + adenosylcob(III)inamide-GDP = adenosylcob(III)alamin + GMP + H(+). The catalysed reaction is alpha-ribazole 5'-phosphate + adenosylcob(III)inamide-GDP = adenosylcob(III)alamin 5'-phosphate + GMP + H(+). It participates in cofactor biosynthesis; adenosylcobalamin biosynthesis; adenosylcobalamin from cob(II)yrinate a,c-diamide: step 7/7. Joins adenosylcobinamide-GDP and alpha-ribazole to generate adenosylcobalamin (Ado-cobalamin). Also synthesizes adenosylcobalamin 5'-phosphate from adenosylcobinamide-GDP and alpha-ribazole 5'-phosphate. The polypeptide is Adenosylcobinamide-GDP ribazoletransferase (Alkalilimnicola ehrlichii (strain ATCC BAA-1101 / DSM 17681 / MLHE-1)).